The chain runs to 247 residues: Probable chemoreceptor glutamine deamidase CheD (247 aa).

The interval 204–247 (KRPAAPQPARPRIELFGGRGTAPGAGSPSAGSPYAANLSRKQEA) is disordered. Residues 227 to 239 (GAGSPSAGSPYAA) are compositionally biased toward low complexity.

The protein belongs to the CheD family.

It carries out the reaction L-glutaminyl-[protein] + H2O = L-glutamyl-[protein] + NH4(+). Probably deamidates glutamine residues to glutamate on methyl-accepting chemotaxis receptors (MCPs), playing an important role in chemotaxis. This chain is Probable chemoreceptor glutamine deamidase CheD, found in Burkholderia orbicola (strain AU 1054).